Reading from the N-terminus, the 310-residue chain is Porphobilinogen deaminase (310 aa).

C242 is modified (S-(dipyrrolylmethanemethyl)cysteine).

Belongs to the HMBS family. Monomer. Dipyrromethane serves as cofactor.

It catalyses the reaction 4 porphobilinogen + H2O = hydroxymethylbilane + 4 NH4(+). The protein operates within porphyrin-containing compound metabolism; protoporphyrin-IX biosynthesis; coproporphyrinogen-III from 5-aminolevulinate: step 2/4. Tetrapolymerization of the monopyrrole PBG into the hydroxymethylbilane pre-uroporphyrinogen in several discrete steps. This chain is Porphobilinogen deaminase, found in Shewanella baltica (strain OS195).